The sequence spans 172 residues: Diphosphoinositol polyphosphate phosphohydrolase 1 (172 aa).

Residue Met-1 is modified to N-acetylmethionine. Substrate is bound by residues Arg-10, Lys-18 to Arg-20, and Ser-39 to Arg-41. One can recognise a Nudix hydrolase domain in the interval Tyr-17–Thr-142. Mg(2+) is bound by residues Gly-50 and Glu-66. Residues Gly-51 to Gly-72 carry the Nudix box motif. Glu-69 functions as the Proton acceptor in the catalytic mechanism. Glu-70 is a binding site for Mg(2+). Residues Arg-89–His-91, Arg-115, and Lys-133 contribute to the substrate site.

This sequence belongs to the Nudix hydrolase family. DIPP subfamily. As to quaternary structure, monomer. It depends on Mg(2+) as a cofactor. Mn(2+) is required as a cofactor. Requires Zn(2+) as cofactor. In terms of tissue distribution, widely expressed. Expressed at higher level in brain, heart, pancreas and liver. Also expressed in placenta, lung and kidney.

Its subcellular location is the cytoplasm. It is found in the nucleus. The enzyme catalyses diphospho-myo-inositol polyphosphate + H2O = myo-inositol polyphosphate + phosphate.. It catalyses the reaction 5-diphospho-1D-myo-inositol 1,2,3,4,6-pentakisphosphate + H2O = 1D-myo-inositol hexakisphosphate + phosphate + H(+). The catalysed reaction is 3,5-bis(diphospho)-1D-myo-inositol 1,2,4,6-tetrakisphosphate + H2O = 3-diphospho-1D-myo-inositol 1,2,4,5,6-pentakisphosphate + phosphate + 2 H(+). It carries out the reaction [phosphate](n+1) + n H2O = (n+1) phosphate + n H(+). The enzyme catalyses P(1),P(5)-bis(5'-adenosyl) pentaphosphate + H2O = ADP + ATP + 2 H(+). It catalyses the reaction P(1),P(6)-bis(5'-adenosyl) hexaphosphate + H2O = 2 ATP + 2 H(+). The catalysed reaction is P(1),P(4)-bis(5'-adenosyl) tetraphosphate + H2O = AMP + ATP + 2 H(+). It carries out the reaction a 5'-end (N(7)-methyl 5'-triphosphoguanosine)-ribonucleoside in mRNA + H2O = N(7)-methyl-GMP + a 5'-end diphospho-ribonucleoside in mRNA + 2 H(+). The enzyme catalyses a 5'-end (N(7)-methyl 5'-triphosphoguanosine)-ribonucleoside in mRNA + H2O = N(7)-methyl-GDP + a 5'-end phospho-ribonucleoside in mRNA + 2 H(+). Endopolyphospahatase activity is inhibited by NaF, NaPPi, beta-glycerol phosphate and heparin. 5-diphosphoinositol pentakisphosphate (5-InsP7) inhibits its mRNA decapping activity. In terms of biological role, cleaves a beta-phosphate from the diphosphate groups in PP-InsP5 (diphosphoinositol pentakisphosphate) and [PP]2-InsP4 (bisdiphosphoinositol tetrakisphosphate), suggesting that it may play a role in signal transduction. InsP6 (inositol hexakisphosphate) is not a substrate. Acts as a negative regulator of the ERK1/2 pathway. Also able to catalyze the hydrolysis of dinucleoside oligophosphates, with diadenosine 5',5'''-P1,P6-hexaphosphate (Ap6A) and diadenosine 5',5'''- P1,P5-pentaphosphate (Ap5A) being the preferred substrates. The major reaction products are ADP and p4a from Ap6A and ADP and ATP from Ap5A. Also able to hydrolyze 5-phosphoribose 1-diphosphate. Acts as a decapping enzyme that modulates the stability of a subset of mRNAs implicated in cell motility. Hydrolyzes monomethylated capped RNA after both the alpha- and beta-phosphates generating m7GMP + ppRNA and m7GDP + pRNA. Can hydrolyze unmethylated capped RNAs. Divalent cations zinc, magnesium and manganese determine its substrate specificity. Exhibits diphosphoinositol polyphosphate phosphohydrolase in the presence of magnesium ions, diadenosine hexaphosphate hydrolase activity in the presence of manganese ions and endopolyphosphatase activity in the presence of zinc ions. Plays an important role in limiting DNA damage and maintaining cell survival upon oxidative stress via its endopolyphosphatase activity. This is Diphosphoinositol polyphosphate phosphohydrolase 1 from Homo sapiens (Human).